The following is a 622-amino-acid chain: Polygalacturonase 1 beta-like protein 1 (622 aa).

Positions 1–21 (MRKQFVFLLPFLSRLYHVVIA) are cleaved as a signal peptide. The FXXY 1 repeat unit spans residues 118-121 (FSVY). An N-linked (GlcNAc...) asparagine glycan is attached at asparagine 125. 11 FXXY repeats span residues 126-129 (FTNY), 140-143 (FKKY), 154-157 (FRRY), 168-171 (FTGY), 182-185 (FNSY), 196-199 (FKNY), 210-213 (FKAY), 224-227 (FKTY), 239-242 (FTSY), 253-256 (FSSY), and 267-270 (FSNY). N-linked (GlcNAc...) asparagine glycosylation occurs at asparagine 278. FXXY repeat units lie at residues 281–284 (FKGY), 295–298 (FKSY), 309–312 (FLNY), 323–326 (FSSY), 337–340 (FVNY), 351–354 (FSGY), and 365–368 (FKTY). N-linked (GlcNAc...) asparagine glycosylation occurs at asparagine 371. 2 FXXY repeats span residues 374–377 (FKDY) and 384–387 (FAKY). Asparagine 388 and asparagine 461 each carry an N-linked (GlcNAc...) asparagine glycan. A BURP domain is found at 407–621 (FFRESMLKEG…FENDMNWAIA (215 aa)).

In terms of tissue distribution, expressed in flowers and stems.

The protein resides in the secreted. The protein localises to the extracellular space. It is found in the apoplast. Its subcellular location is the cell wall. Involved in cell size determination. This chain is Polygalacturonase 1 beta-like protein 1, found in Arabidopsis thaliana (Mouse-ear cress).